We begin with the raw amino-acid sequence, 306 residues long: Putative F-box protein At1g47300 (306 aa).

An F-box domain is found at 1–45 (MISDSIPKELILEIMLRLPAKSIARFHCVSKQWASMLSRPYFTEL). Positions 235-278 (DPKLLESKEEEEEEEEEEEEEEEEEEEEEEEEEEEESKEREKEK) are disordered. Residues 242–270 (KEEEEEEEEEEEEEEEEEEEEEEEEEEEE) are compositionally biased toward acidic residues.

The polypeptide is Putative F-box protein At1g47300 (Arabidopsis thaliana (Mouse-ear cress)).